Consider the following 247-residue polypeptide: Probable transcriptional regulatory protein LAF_0541 (247 aa).

Positions 1–22 are disordered; that stretch reads MSGHSKWHNIQGRKNAQDAKRG.

This sequence belongs to the TACO1 family.

The protein localises to the cytoplasm. The sequence is that of Probable transcriptional regulatory protein LAF_0541 from Limosilactobacillus fermentum (strain NBRC 3956 / LMG 18251) (Lactobacillus fermentum).